A 75-amino-acid chain; its full sequence is UPF0352 protein YejL (75 aa).

Belongs to the UPF0352 family.

The protein is UPF0352 protein YejL of Escherichia coli O139:H28 (strain E24377A / ETEC).